We begin with the raw amino-acid sequence, 575 residues long: Epsin-1 (575 aa).

A 1,2-diacyl-sn-glycero-3-phospho-(1D-myo-inositol-4,5-bisphosphate) is bound by residues Lys11, Arg25, Asn30, Arg63, and His73. Residues 12-144 form the ENTH domain; sequence NIVHNYSEAE…RDEDRLREER (133 aa). The tract at residues 150–186 is disordered; the sequence is TKEKLAQTATASSAAVGSGPPPEAEQAWPQSSGEEEL. Low complexity predominate over residues 157 to 167; the sequence is TATASSAAVGS. 3 consecutive UIM domains span residues 183-202, 208-227, and 233-252; these read EEEL…ADQP, EDDV…HDKE, and GDDL…TGGK. The segment at 264-575 is disordered; the sequence is FTTPAPPQAS…PAPNTNPFLL (312 aa). 8 tandem repeats follow at residues 274 to 276, 294 to 296, 306 to 308, 319 to 321, 332 to 334, 349 to 351, 367 to 369, and 377 to 379. The tract at residues 274-379 is 8 X 3 AA repeats of D-P-W; that stretch reads DPWGGPASVP…APAPAFSDPW (106 aa). Composition is skewed to low complexity over residues 279–299 and 306–316; these read PASV…WGGP and DPWGGAAPTPA. The segment covering 332 to 346 has biased composition (low complexity); sequence DPWGGTPAPAAGEGP. Residues 367 to 379 show a composition bias toward low complexity; the sequence is DPWAPAPAFSDPW. Ser382 bears the Phosphoserine mark. The [DE]-X(1,2)-F-X-X-[FL]-X-X-X-R motif signature appears at 401–410; it reads DEFSDFDRLR. Phosphoserine is present on residues Ser418 and Ser419. At Thr420 the chain carries Phosphothreonine. A phosphoserine mark is found at Ser434, Ser446, and Ser453. Pro residues predominate over residues 453 to 467; it reads SPPPAATPTPTPPTR. 3 positions are modified to phosphothreonine: Thr459, Thr463, and Thr469. At Ser472 the chain carries Phosphoserine. Thr493 carries the post-translational modification Phosphothreonine. Tandem repeats lie at residues 501–503 and 517–519. Positions 501–573 are 3 X 3 AA repeats of N-P-F; the sequence is NPFLPSGAPP…GPPAPNTNPF (73 aa). An Omega-N-methylarginine modification is found at Arg533. Over residues 556 to 569 the composition is skewed to pro residues; it reads GLPPMMPPGPPAPN. Repeat 3 spans residues 571–573; the sequence is NPF.

The protein belongs to the epsin family. Monomer. Binds clathrin and ZBTB16/ZNF145. Binds ubiquitinated proteins. Interacts with RALBP1 in a complex also containing NUMB and TFAP2A during interphase and mitosis. Interacts with AP2B1. Interacts with UBQLN2. Interacts with ITSN1. Interacts with AP2A1 and AP2A2. Interacts with REPS2; the interaction is direct. Interacts with EPS15; the interaction is direct. Interacts with ENTREP1. Phosphorylated on serine and/or threonine residues in mitotic cells. Phosphorylation reduces interaction with REPS2, AP-2 and the membrane fraction. Depolarization of synaptosomes results in dephosphorylation. Post-translationally, ubiquitinated.

It localises to the cytoplasm. Its subcellular location is the cell membrane. The protein localises to the nucleus. The protein resides in the membrane. It is found in the clathrin-coated pit. Its function is as follows. Binds to membranes enriched in phosphatidylinositol 4,5-bisphosphate (PtdIns(4,5)P2). Modifies membrane curvature and facilitates the formation of clathrin-coated invaginations. Regulates receptor-mediated endocytosis. The chain is Epsin-1 (Epn1) from Mus musculus (Mouse).